A 279-amino-acid polypeptide reads, in one-letter code: MNYQDNSLKSLKLGQKTEYASQYDRTLLQPVPRALNRDGLGITQNQPFTIGADIWTAYEISWLNEKGLPQVAIADIYLDYQSQNLIESKSFKLYLNSFNQSKFADFNAVQQTMQRDLSECAQGDVKVRLNPMAVYDSQKIDHLQGDCIDEQDIEITSYEFNANWLKDCVSDEIVEEKLVSHLLKSNCLITNQPDWGTLHIHYVGKKINQEKLLRYVVSFRQHNEFHEQCVERIFCDLMHYAKPEKLTVYARYTRRGGLDINPFRSNFENLPENLRLARQ.

86–88 (IES) serves as a coordination point for substrate. 88–89 (SK) is a binding site for NADPH. Cys187 (thioimide intermediate) is an active-site residue. Asp194 (proton donor) is an active-site residue. 226–227 (HE) lines the substrate pocket. Residue 255–256 (RG) participates in NADPH binding.

This sequence belongs to the GTP cyclohydrolase I family. QueF type 2 subfamily. In terms of assembly, homodimer.

The protein localises to the cytoplasm. It catalyses the reaction 7-aminomethyl-7-carbaguanine + 2 NADP(+) = 7-cyano-7-deazaguanine + 2 NADPH + 3 H(+). Its pathway is tRNA modification; tRNA-queuosine biosynthesis. Its function is as follows. Catalyzes the NADPH-dependent reduction of 7-cyano-7-deazaguanine (preQ0) to 7-aminomethyl-7-deazaguanine (preQ1). This chain is NADPH-dependent 7-cyano-7-deazaguanine reductase, found in Haemophilus influenzae (strain ATCC 51907 / DSM 11121 / KW20 / Rd).